The following is a 108-amino-acid chain: Small ribosomal subunit protein uS17 (108 aa).

The disordered stretch occupies residues 1–26; the sequence is MREKMAEATETQASETSTRGRPKTRV. Residues 8–17 show a composition bias toward low complexity; sequence ATETQASETS.

The protein belongs to the universal ribosomal protein uS17 family. Part of the 30S ribosomal subunit.

One of the primary rRNA binding proteins, it binds specifically to the 5'-end of 16S ribosomal RNA. The polypeptide is Small ribosomal subunit protein uS17 (Myxococcus xanthus (strain DK1622)).